Consider the following 223-residue polypeptide: Voltage-dependent calcium channel gamma-1 subunit (223 aa).

Topologically, residues 1–10 (MSQTKTLKVR) are cytoplasmic. The helical transmembrane segment at 11 to 29 (VALLCILVGIVLALVAVVT) threads the bilayer. The Extracellular segment spans residues 30–109 (DHWAVLSPHV…TQKEYSISAA (80 aa)). 2 N-linked (GlcNAc...) asparagine glycosylation sites follow: Asn43 and Asn80. Cysteines 57 and 81 form a disulfide. Residues 110-130 (AIAIFSLGFIIVGTLCALLSF) traverse the membrane as a helical segment. Residues 131–135 (RKKRD) lie on the Cytoplasmic side of the membrane. The chain crosses the membrane as a helical span at residues 136–156 (YLLRPASMFYIFAGLCLSVSA). The Extracellular portion of the chain corresponds to 157–180 (EVMRQSVQRMVDSEHTAWIAHSLA). A helical transmembrane segment spans residues 181–205 (WSFICACVAAALLLVGGLALLLLAL). The Cytoplasmic portion of the chain corresponds to 206-223 (PRMPRDPWESCMDAEPEH).

It belongs to the PMP-22/EMP/MP20 family. CACNG subfamily. In terms of assembly, component of a calcium channel complex consisting of a pore-forming alpha subunit (CACNA1S) and the ancillary subunits CACNB1 or CACNB2, CACNG1 and CACNA2D1. The channel complex contains alpha, beta, gamma and delta subunits in a 1:1:1:1 ratio, i.e. it contains either CACNB1 or CACNB2. Post-translationally, N-glycosylated.

It localises to the cell membrane. Its subcellular location is the sarcolemma. Regulatory subunit of the voltage-gated calcium channel that gives rise to L-type calcium currents in skeletal muscle. Regulates channel inactivation kinetics. The chain is Voltage-dependent calcium channel gamma-1 subunit (CACNG1) from Bos taurus (Bovine).